The chain runs to 97 residues: Co-chaperonin GroES (97 aa).

Belongs to the GroES chaperonin family. As to quaternary structure, heptamer of 7 subunits arranged in a ring. Interacts with the chaperonin GroEL.

Its subcellular location is the cytoplasm. Together with the chaperonin GroEL, plays an essential role in assisting protein folding. The GroEL-GroES system forms a nano-cage that allows encapsulation of the non-native substrate proteins and provides a physical environment optimized to promote and accelerate protein folding. GroES binds to the apical surface of the GroEL ring, thereby capping the opening of the GroEL channel. In Pseudomonas fluorescens (strain ATCC BAA-477 / NRRL B-23932 / Pf-5), this protein is Co-chaperonin GroES.